The following is a 205-amino-acid chain: Probable thymidylate kinase (205 aa).

Residue 9 to 16 coordinates ATP; that stretch reads GIDGVGKS.

It belongs to the thymidylate kinase family.

It carries out the reaction dTMP + ATP = dTDP + ADP. This is Probable thymidylate kinase from Caldivirga maquilingensis (strain ATCC 700844 / DSM 13496 / JCM 10307 / IC-167).